We begin with the raw amino-acid sequence, 161 residues long: Transcription elongation factor GreA (161 aa).

Residues 46–71 are a coiled coil; the sequence is AEYTAAKEKQSFLHGKLQELENNLAL.

This sequence belongs to the GreA/GreB family.

Functionally, necessary for efficient RNA polymerase transcription elongation past template-encoded arresting sites. The arresting sites in DNA have the property of trapping a certain fraction of elongating RNA polymerases that pass through, resulting in locked ternary complexes. Cleavage of the nascent transcript by cleavage factors such as GreA or GreB allows the resumption of elongation from the new 3'terminus. GreA releases sequences of 2 to 3 nucleotides. The polypeptide is Transcription elongation factor GreA (Syntrophus aciditrophicus (strain SB)).